Reading from the N-terminus, the 156-residue chain is Small ribosomal subunit protein uS7 (156 aa).

It belongs to the universal ribosomal protein uS7 family. Part of the 30S ribosomal subunit. Contacts proteins S9 and S11.

Functionally, one of the primary rRNA binding proteins, it binds directly to 16S rRNA where it nucleates assembly of the head domain of the 30S subunit. Is located at the subunit interface close to the decoding center, probably blocks exit of the E-site tRNA. The polypeptide is Small ribosomal subunit protein uS7 (Leifsonia xyli subsp. xyli (strain CTCB07)).